The sequence spans 243 residues: Segregation and condensation protein A (243 aa).

This sequence belongs to the ScpA family. As to quaternary structure, component of a cohesin-like complex composed of ScpA, ScpB and the Smc homodimer, in which ScpA and ScpB bind to the head domain of Smc. The presence of the three proteins is required for the association of the complex with DNA.

Its subcellular location is the cytoplasm. Participates in chromosomal partition during cell division. May act via the formation of a condensin-like complex containing Smc and ScpB that pull DNA away from mid-cell into both cell halves. In Staphylococcus aureus (strain NCTC 8325 / PS 47), this protein is Segregation and condensation protein A.